Reading from the N-terminus, the 287-residue chain is ATP synthase gamma chain (287 aa).

Belongs to the ATPase gamma chain family. As to quaternary structure, F-type ATPases have 2 components, CF(1) - the catalytic core - and CF(0) - the membrane proton channel. CF(1) has five subunits: alpha(3), beta(3), gamma(1), delta(1), epsilon(1). CF(0) has three main subunits: a, b and c.

The protein localises to the cell inner membrane. Produces ATP from ADP in the presence of a proton gradient across the membrane. The gamma chain is believed to be important in regulating ATPase activity and the flow of protons through the CF(0) complex. This is ATP synthase gamma chain from Colwellia psychrerythraea (strain 34H / ATCC BAA-681) (Vibrio psychroerythus).